The sequence spans 210 residues: Phosphoenolpyruvate guanylyltransferase (210 aa).

3 residues coordinate phosphoenolpyruvate: T130, G146, and S149.

This sequence belongs to the CofC family.

It catalyses the reaction phosphoenolpyruvate + GTP + H(+) = enolpyruvoyl-2-diphospho-5'-guanosine + diphosphate. It participates in cofactor biosynthesis; coenzyme F420 biosynthesis. In terms of biological role, guanylyltransferase that catalyzes the activation of phosphoenolpyruvate (PEP) as enolpyruvoyl-2-diphospho-5'-guanosine, via the condensation of PEP with GTP. It is involved in the biosynthesis of coenzyme F420, a hydride carrier cofactor. The sequence is that of Phosphoenolpyruvate guanylyltransferase from Roseiflexus castenholzii (strain DSM 13941 / HLO8).